A 452-amino-acid polypeptide reads, in one-letter code: Phosphoglucosamine mutase (452 aa).

The Phosphoserine intermediate role is filled by serine 109. Residues serine 109, aspartate 248, aspartate 250, and aspartate 252 each coordinate Mg(2+). At serine 109 the chain carries Phosphoserine.

This sequence belongs to the phosphohexose mutase family. The cofactor is Mg(2+). Activated by phosphorylation.

The catalysed reaction is alpha-D-glucosamine 1-phosphate = D-glucosamine 6-phosphate. Catalyzes the conversion of glucosamine-6-phosphate to glucosamine-1-phosphate. The polypeptide is Phosphoglucosamine mutase (Erythrobacter litoralis (strain HTCC2594)).